Here is a 467-residue protein sequence, read N- to C-terminus: UDP-N-acetylmuramate--L-alanine ligase (467 aa).

114–120 (GTHGKTT) serves as a coordination point for ATP.

The protein belongs to the MurCDEF family.

It localises to the cytoplasm. It catalyses the reaction UDP-N-acetyl-alpha-D-muramate + L-alanine + ATP = UDP-N-acetyl-alpha-D-muramoyl-L-alanine + ADP + phosphate + H(+). It participates in cell wall biogenesis; peptidoglycan biosynthesis. Its function is as follows. Cell wall formation. The sequence is that of UDP-N-acetylmuramate--L-alanine ligase from Bradyrhizobium sp. (strain BTAi1 / ATCC BAA-1182).